Reading from the N-terminus, the 45-residue chain is Bomanin Short 1 (45 aa).

A signal peptide spans 1 to 20; that stretch reads MKFFSVVTVFVLGLLAVANA. Positions 21–27 are cleaved as a propeptide — removed by a dipeptidylpeptidase; the sequence is VPLSPDP. Cysteine 36 and cysteine 39 are joined by a disulfide. A Glycine amide modification is found at glycine 43.

As to expression, hemolymph (at protein level).

It localises to the secreted. Secreted immune-induced peptide induced by Toll signaling. Has a role in resistance to bacterial and fungal infections. Has no activity against the fungus C.glabrata in vitro. This is Bomanin Short 1 from Drosophila melanogaster (Fruit fly).